The primary structure comprises 90 residues: MNHLILIVAMCLMVIGVQCLKDGYLYDDVDCKFSCWDNEYCRKLCKSKKAVGGYCWRWRFSCYCTGLPDNEKTEGTYKCGQGRFLMGKDK.

A signal peptide spans 1–19 (MNHLILIVAMCLMVIGVQC). In terms of domain architecture, LCN-type CS-alpha/beta spans 21-80 (KDGYLYDDVDCKFSCWDNEYCRKLCKSKKAVGGYCWRWRFSCYCTGLPDNEKTEGTYKCG). 4 cysteine pairs are disulfide-bonded: cysteine 31–cysteine 79, cysteine 35–cysteine 55, cysteine 41–cysteine 62, and cysteine 45–cysteine 64.

The protein belongs to the long (4 C-C) scorpion toxin superfamily. Sodium channel inhibitor family. Alpha subfamily. In terms of tissue distribution, expressed by the venom gland.

It is found in the secreted. Functionally, binds voltage-independently at site-3 of voltage-gated sodium channels (Nav) and inhibits the inactivation of the activated channels, thereby blocking neuronal transmission. The protein is Neurotoxin LmNaTx19 of Lychas mucronatus (Chinese swimming scorpion).